Consider the following 514-residue polypeptide: Periplasmic [NiFeSe] hydrogenase large subunit (514 aa).

Fe cation is bound at residue glutamate 52. The Ni(2+) site is built by cysteine 71 and cysteine 74. Fe cation contacts are provided by cysteine 74 and isoleucine 445. Ni(2+) contacts are provided by selenocysteine 493 and cysteine 496. A non-standard amino acid (selenocysteine) is located at residue selenocysteine 493. The Fe cation site is built by cysteine 496 and histidine 499.

It belongs to the [NiFe]/[NiFeSe] hydrogenase large subunit family. Heterodimer of a large and a small subunit. Requires Fe cation as cofactor. The cofactor is Ni(2+).

The protein resides in the periplasm. It carries out the reaction H2 + A = AH2. The protein is Periplasmic [NiFeSe] hydrogenase large subunit of Desulfomicrobium baculatum (Desulfovibrio baculatus).